A 159-amino-acid chain; its full sequence is uncharacterized protein (159 aa).

This is an uncharacterized protein from Acanthamoeba polyphaga (Amoeba).